The sequence spans 679 residues: Methionine--tRNA ligase (679 aa).

Residues 14–24 (PYANGSIHLGH) carry the 'HIGH' region motif. Positions 145, 148, 158, and 161 each coordinate Zn(2+). The 'KMSKS' region signature appears at 331-335 (KMSKS). Position 334 (Lys334) interacts with ATP. One can recognise a tRNA-binding domain in the interval 577 to 679 (TFAAVDLRVA…SGAKPGQRIK (103 aa)).

It belongs to the class-I aminoacyl-tRNA synthetase family. MetG type 1 subfamily. Homodimer. It depends on Zn(2+) as a cofactor.

Its subcellular location is the cytoplasm. The enzyme catalyses tRNA(Met) + L-methionine + ATP = L-methionyl-tRNA(Met) + AMP + diphosphate. Functionally, is required not only for elongation of protein synthesis but also for the initiation of all mRNA translation through initiator tRNA(fMet) aminoacylation. This Pseudomonas putida (strain ATCC 700007 / DSM 6899 / JCM 31910 / BCRC 17059 / LMG 24140 / F1) protein is Methionine--tRNA ligase.